The chain runs to 263 residues: Tryptophan synthase alpha chain (263 aa).

Active-site proton acceptor residues include glutamate 49 and aspartate 60.

It belongs to the TrpA family. In terms of assembly, tetramer of two alpha and two beta chains.

It catalyses the reaction (1S,2R)-1-C-(indol-3-yl)glycerol 3-phosphate + L-serine = D-glyceraldehyde 3-phosphate + L-tryptophan + H2O. It participates in amino-acid biosynthesis; L-tryptophan biosynthesis; L-tryptophan from chorismate: step 5/5. Functionally, the alpha subunit is responsible for the aldol cleavage of indoleglycerol phosphate to indole and glyceraldehyde 3-phosphate. This is Tryptophan synthase alpha chain from Cereibacter sphaeroides (strain ATCC 17025 / ATH 2.4.3) (Rhodobacter sphaeroides).